Here is a 153-residue protein sequence, read N- to C-terminus: 6,7-dimethyl-8-ribityllumazine synthase (153 aa).

5-amino-6-(D-ribitylamino)uracil is bound by residues F21, 55–57 (AFE), and 79–81 (TVI). Residue 84-85 (AT) coordinates (2S)-2-hydroxy-3-oxobutyl phosphate. H87 (proton donor) is an active-site residue. Position 112 (F112) interacts with 5-amino-6-(D-ribitylamino)uracil. R126 contacts (2S)-2-hydroxy-3-oxobutyl phosphate.

Belongs to the DMRL synthase family. As to quaternary structure, forms an icosahedral capsid composed of 60 subunits, arranged as a dodecamer of pentamers.

The catalysed reaction is (2S)-2-hydroxy-3-oxobutyl phosphate + 5-amino-6-(D-ribitylamino)uracil = 6,7-dimethyl-8-(1-D-ribityl)lumazine + phosphate + 2 H2O + H(+). It participates in cofactor biosynthesis; riboflavin biosynthesis; riboflavin from 2-hydroxy-3-oxobutyl phosphate and 5-amino-6-(D-ribitylamino)uracil: step 1/2. In terms of biological role, catalyzes the formation of 6,7-dimethyl-8-ribityllumazine by condensation of 5-amino-6-(D-ribitylamino)uracil with 3,4-dihydroxy-2-butanone 4-phosphate. This is the penultimate step in the biosynthesis of riboflavin. This chain is 6,7-dimethyl-8-ribityllumazine synthase, found in Bacillus cereus (strain ATCC 10987 / NRS 248).